A 346-amino-acid chain; its full sequence is tRNA-specific 2-thiouridylase MnmA (346 aa).

6 to 13 (AMSGGTDS) provides a ligand contact to ATP. C90 functions as the Nucleophile in the catalytic mechanism. Residues C90 and C187 are joined by a disulfide bond. G114 serves as a coordination point for ATP. Residues 137–139 (KDQ) are interaction with tRNA. C187 functions as the Cysteine persulfide intermediate in the catalytic mechanism. Positions 292-293 (RY) are interaction with tRNA.

This sequence belongs to the MnmA/TRMU family.

It localises to the cytoplasm. The catalysed reaction is S-sulfanyl-L-cysteinyl-[protein] + uridine(34) in tRNA + AH2 + ATP = 2-thiouridine(34) in tRNA + L-cysteinyl-[protein] + A + AMP + diphosphate + H(+). Catalyzes the 2-thiolation of uridine at the wobble position (U34) of tRNA, leading to the formation of s(2)U34. The sequence is that of tRNA-specific 2-thiouridylase MnmA from Nitratidesulfovibrio vulgaris (strain DP4) (Desulfovibrio vulgaris).